We begin with the raw amino-acid sequence, 230 residues long: Flagellar L-ring protein (230 aa).

A signal peptide spans 1–15 (MSRLPSLSRPCLAIA). A lipid anchor (N-palmitoyl cysteine) is attached at Cys-16. A lipid anchor (S-diacylglycerol cysteine) is attached at Cys-16.

The protein belongs to the FlgH family. The basal body constitutes a major portion of the flagellar organelle and consists of four rings (L,P,S, and M) mounted on a central rod.

It is found in the cell outer membrane. It localises to the bacterial flagellum basal body. Its function is as follows. Assembles around the rod to form the L-ring and probably protects the motor/basal body from shearing forces during rotation. This Xanthomonas axonopodis pv. citri (strain 306) protein is Flagellar L-ring protein.